We begin with the raw amino-acid sequence, 402 residues long: MITCFHSNKNCKTKSIKHSTIILLTMAHIEELTTTDVADALLSELVINHTDLRNKVYEVINDNTSSSLDNLYDVAKALAGSQFIVKKIRIYTKESRKEVWTRLIAGHLPSMIITPFFNAMFPASEIKISTFAEMANKKDLTEEVTIPTLSIVDGFDMKFSEVEHKLISSVLSVCRKVIFINNPAKDYSEQHAERIKLLTCGGKIMTYINRFFMKIKKGVSISAVPLIGDMSLCMLINGLGSSQTNFPPARVSFHITYDVKSRTDMLRIGCGGVISNVFSFDSLGNLTVHKESNKHGYVAIVMDKSLFDKKTSLEINNMMTDVCWEHIEQLKPYPKDYVKVGLLHLESVEFNDQQYYLPVVKRKLPSMFTAVSGRIAGNNFYSMFKDVCLPLPPSSLDGKDVM.

This is an uncharacterized protein from Ostreid herpesvirus 1 (isolate France) (OsHV-1).